The chain runs to 824 residues: Leucine--tRNA ligase (824 aa).

Residues 42–52 (PYPSGRIHMGH) carry the 'HIGH' region motif. Residues 581–585 (KMSKS) carry the 'KMSKS' region motif. Residue lysine 584 coordinates ATP.

The protein belongs to the class-I aminoacyl-tRNA synthetase family.

It localises to the cytoplasm. The enzyme catalyses tRNA(Leu) + L-leucine + ATP = L-leucyl-tRNA(Leu) + AMP + diphosphate. The sequence is that of Leucine--tRNA ligase from Geotalea daltonii (strain DSM 22248 / JCM 15807 / FRC-32) (Geobacter daltonii).